A 764-amino-acid chain; its full sequence is Protein FAR1-RELATED SEQUENCE 7 (764 aa).

An FAR1 1 domain is found at 42 to 118 (DYYNSYATRT…QKEHNHDLGG (77 aa)). A disordered region spans residues 119-144 (HIEEAQTTPRPSVQQRAPAPTKLGIS). Residues 123 to 133 (AQTTPRPSVQQ) show a composition bias toward polar residues. In terms of domain architecture, FAR1 2 spans 204-280 (QFYQAYAEVV…NKDHNHDLEP (77 aa)). The MULE domain maps to 375 to 471 (AVVFDTSYRK…SAWQIRSKER (97 aa)). The SWIM-type zinc finger occupies 650–686 (HAVTFSASNLNASCSCQMFEYEGLLCRHILKVFNLLD).

This sequence belongs to the FHY3/FAR1 family. In terms of tissue distribution, expressed in hypocotyls, rosette and cauline leaves, inflorescences stems, flowers and siliques.

The protein resides in the nucleus. Putative transcription activator involved in regulating light control of development. This Arabidopsis thaliana (Mouse-ear cress) protein is Protein FAR1-RELATED SEQUENCE 7 (FRS7).